A 307-amino-acid chain; its full sequence is Membrane protein insertase YidC 1 (307 aa).

The N-terminal stretch at 1–22 is a signal peptide; sequence MKSKKGLTLTITLGTLALFLSG. Cys-23 is lipidated: N-palmitoyl cysteine. A lipid anchor (S-diacylglycerol cysteine) is attached at Cys-23. 5 helical membrane passes run 59-79, 136-156, 177-197, 205-225, and 226-246; these read YGWAIIGLTVIVRLVLLPMMI, GIGCLPLLIQLPIFSALYYAI, LILAILAFLSYLAQGYLSMIG, TMRLMLIMSPVMILFVSMSAP, and AGLGLYFFVGGLFACLQTLII. The tract at residues 260-307 is disordered; that stretch reads ELKKHPIKTPTPTQPKPINATESKPSHPRPQNNAGRGRNAGKQQRHHK.

This sequence belongs to the OXA1/ALB3/YidC family. Type 2 subfamily.

Its subcellular location is the cell membrane. Its function is as follows. Required for the insertion and/or proper folding and/or complex formation of integral membrane proteins into the membrane. Involved in integration of membrane proteins that insert both dependently and independently of the Sec translocase complex, as well as at least some lipoproteins. The polypeptide is Membrane protein insertase YidC 1 (Lactiplantibacillus plantarum (strain ATCC BAA-793 / NCIMB 8826 / WCFS1) (Lactobacillus plantarum)).